Consider the following 196-residue polypeptide: MQTNELLDKIFRGARSQNGWLPTPVPDSKLRELYDLMKFGPTSVNCSPARLVFVRTEEGREKLRPALAPGNVEKTMAAPVVAIVGYDTRFYEQLPDLFPHNPAVKAWFEGDEKVDFANTTAFRNGTLQGGYLIAAARALGLDCGPMSGFNNQAIDQAFFAGTSIRSNFICGLGHGDPEKVFARSPRLSFEQACQLA.

The protein belongs to the nitroreductase family. HadB/RutE subfamily. Requires FMN as cofactor.

The chain is Putative NADH dehydrogenase/NAD(P)H nitroreductase Reut_A1586 from Cupriavidus pinatubonensis (strain JMP 134 / LMG 1197) (Cupriavidus necator (strain JMP 134)).